The primary structure comprises 121 residues: Small ribosomal subunit protein uS13 (121 aa).

The tract at residues 93–121 is disordered; sequence KGLPMRGQRTRTNARTRKGPRRAAQALKK.

This sequence belongs to the universal ribosomal protein uS13 family. Part of the 30S ribosomal subunit. Forms a loose heterodimer with protein S19. Forms two bridges to the 50S subunit in the 70S ribosome.

Located at the top of the head of the 30S subunit, it contacts several helices of the 16S rRNA. In the 70S ribosome it contacts the 23S rRNA (bridge B1a) and protein L5 of the 50S subunit (bridge B1b), connecting the 2 subunits; these bridges are implicated in subunit movement. Contacts the tRNAs in the A and P-sites. In Burkholderia ambifaria (strain ATCC BAA-244 / DSM 16087 / CCUG 44356 / LMG 19182 / AMMD) (Burkholderia cepacia (strain AMMD)), this protein is Small ribosomal subunit protein uS13.